Consider the following 415-residue polypeptide: Mulatexin (415 aa).

Positions 1-21 are cleaved as a signal peptide; that stretch reads MKFRTLLIIFSLVFLLEIVSA. One can recognise a Chitin-binding type-1 1 domain in the interval 23 to 66; sequence EPQCGRDAGGALCHGNLCCSHWGFCGTTAIYCDVDQGCQSQCWS. Disulfide bonds link Cys26/Cys41, Cys35/Cys47, Cys40/Cys54, and Cys60/Cys64. The interval 65-127 is disordered; it reads WSSPPPPSPP…PGGPERPDHR (63 aa). Positions 67–121 are enriched in pro residues; that stretch reads SPPPPSPPPPPPSPPPPSPPPPSPPPPSPPPPSPPPPSPPPPSPPPPSPPPPGGP. One can recognise a Chitin-binding type-1 2 domain in the interval 125 to 167; sequence DHRCGRALGNPPCNPGRCCSIHNWCGSTAAYCRGSSCQYQCWN. Cystine bridges form between Cys128-Cys143, Cys137-Cys149, Cys142-Cys156, and Cys161-Cys165. A glycan (N-linked (GlcNAc...) asparagine) is linked at Asn264.

Glycosylated.

It localises to the secreted. Functionally, chitin-binding protein which slows larval growth when consumed by the lepidopteran species S.ricini and M.brassica, but not when consumed by the mulberry specialist B.mori. Lacks chitinase activity. The polypeptide is Mulatexin (Morus alba (White mulberry)).